Reading from the N-terminus, the 250-residue chain is Ribonuclease HII (250 aa).

The region spanning 66 to 250 (ELVAGVDEVG…TFAPVSDFFK (185 aa)) is the RNase H type-2 domain. Residues Asp-72, Glu-73, and Asp-164 each contribute to the a divalent metal cation site.

Belongs to the RNase HII family. Mn(2+) is required as a cofactor. It depends on Mg(2+) as a cofactor.

It localises to the cytoplasm. It catalyses the reaction Endonucleolytic cleavage to 5'-phosphomonoester.. Its function is as follows. Endonuclease that specifically degrades the RNA of RNA-DNA hybrids. The chain is Ribonuclease HII from Lactobacillus helveticus (strain DPC 4571).